A 175-amino-acid polypeptide reads, in one-letter code: Translation initiation factor IF-3 (175 aa).

Belongs to the IF-3 family. In terms of assembly, monomer.

The protein resides in the cytoplasm. Functionally, IF-3 binds to the 30S ribosomal subunit and shifts the equilibrium between 70S ribosomes and their 50S and 30S subunits in favor of the free subunits, thus enhancing the availability of 30S subunits on which protein synthesis initiation begins. This Staphylococcus aureus (strain NCTC 8325 / PS 47) protein is Translation initiation factor IF-3.